The following is a 237-amino-acid chain: N-(5'-phosphoribosyl)anthranilate isomerase (237 aa).

This sequence belongs to the TrpF family.

It carries out the reaction N-(5-phospho-beta-D-ribosyl)anthranilate = 1-(2-carboxyphenylamino)-1-deoxy-D-ribulose 5-phosphate. The protein operates within amino-acid biosynthesis; L-tryptophan biosynthesis; L-tryptophan from chorismate: step 3/5. This is N-(5'-phosphoribosyl)anthranilate isomerase from Desulfitobacterium hafniense (strain DSM 10664 / DCB-2).